We begin with the raw amino-acid sequence, 428 residues long: Adenylosuccinate synthetase (428 aa).

GTP contacts are provided by residues 12-18 and 40-42; these read GDEGKGK and GHT. The active-site Proton acceptor is the D13. The Mg(2+) site is built by D13 and G40. IMP-binding positions include 13–16, 38–41, T130, R144, Q225, T240, and R304; these read DEGK and NAGH. The active-site Proton donor is H41. 300–306 contributes to the substrate binding site; that stretch reads VTTGRAR. Residues R306, 332–334, and 414–416 contribute to the GTP site; these read KID and SVG.

Belongs to the adenylosuccinate synthetase family. As to quaternary structure, homodimer. Requires Mg(2+) as cofactor.

The protein resides in the cytoplasm. The catalysed reaction is IMP + L-aspartate + GTP = N(6)-(1,2-dicarboxyethyl)-AMP + GDP + phosphate + 2 H(+). Its pathway is purine metabolism; AMP biosynthesis via de novo pathway; AMP from IMP: step 1/2. Functionally, plays an important role in the de novo pathway of purine nucleotide biosynthesis. Catalyzes the first committed step in the biosynthesis of AMP from IMP. This Clostridium botulinum (strain ATCC 19397 / Type A) protein is Adenylosuccinate synthetase.